Consider the following 204-residue polypeptide: Potassium-transporting ATPase KdpC subunit (204 aa).

The helical transmembrane segment at 21 to 41 (AALVIFVGLSLVTGVLYPVVV) threads the bilayer.

Belongs to the KdpC family. As to quaternary structure, the system is composed of three essential subunits: KdpA, KdpB and KdpC.

The protein localises to the cell inner membrane. Part of the high-affinity ATP-driven potassium transport (or Kdp) system, which catalyzes the hydrolysis of ATP coupled with the electrogenic transport of potassium into the cytoplasm. This subunit acts as a catalytic chaperone that increases the ATP-binding affinity of the ATP-hydrolyzing subunit KdpB by the formation of a transient KdpB/KdpC/ATP ternary complex. In Ralstonia nicotianae (strain ATCC BAA-1114 / GMI1000) (Ralstonia solanacearum), this protein is Potassium-transporting ATPase KdpC subunit.